Here is a 95-residue protein sequence, read N- to C-terminus: MKKTSLKLMTLVLGFCFVIYLLQGPRGGSRNGDLLIARKLISLEPIETKNAARSLKDSISTDLEEEVDRLMEHEYPSPVKPRKRTPVHNGVRNRH.

A signal peptide spans 1–24; the sequence is MKKTSLKLMTLVLGFCFVIYLLQG. The propeptide occupies 25-73; that stretch reads PRGGSRNGDLLIARKLISLEPIETKNAARSLKDSISTDLEEEVDRLMEH. Residues 72–95 form a disordered region; that stretch reads EHEYPSPVKPRKRTPVHNGVRNRH. Sulfotyrosine is present on Tyr-75. Over residues 80 to 95 the composition is skewed to basic residues; the sequence is KPRKRTPVHNGVRNRH. Pro-86 carries the post-translational modification Hydroxyproline. Residues 90–95 constitute a propeptide that is removed on maturation; it reads GVRNRH.

The protein belongs to the RGF family. As to quaternary structure, binds to LRR receptor-like serine/threonine-protein kinases to trigger their dimerization with SERK proteins and subsequent signaling. As to expression, expressed in roots.

The protein localises to the secreted. Its function is as follows. Signaling peptide (root growth factor) required during root gravitropism in a PIN2-traffic dependent manner. Regulates the pattern of root growth and lateral root development by modulating the length and the number of cortical cells in the root apical meristem (RAM), and the anticlinal asymmetric cell divisions in lateral root initiation cells. The protein is Protein GOLVEN 9 of Arabidopsis thaliana (Mouse-ear cress).